We begin with the raw amino-acid sequence, 421 residues long: Protein MucB (421 aa).

One can recognise a UmuC domain in the interval 2–187 (FALIDVNGMY…LPVAEVWGVG (186 aa)).

This sequence belongs to the DNA polymerase type-Y family.

Involved in UV protection and mutation. The chain is Protein MucB (mucB) from Salmonella typhimurium.